Consider the following 396-residue polypeptide: Acetate kinase (396 aa).

A Mg(2+)-binding site is contributed by Asn-7. ATP is bound at residue Lys-14. Residue Arg-88 coordinates substrate. The active-site Proton donor/acceptor is Asp-145. ATP is bound by residues 205–209 (HLGNG), 279–281 (DFR), and 327–331 (GIGEN). Glu-381 contributes to the Mg(2+) binding site.

It belongs to the acetokinase family. In terms of assembly, homodimer. Requires Mg(2+) as cofactor. Mn(2+) is required as a cofactor.

The protein resides in the cytoplasm. It carries out the reaction acetate + ATP = acetyl phosphate + ADP. The protein operates within metabolic intermediate biosynthesis; acetyl-CoA biosynthesis; acetyl-CoA from acetate: step 1/2. In terms of biological role, catalyzes the formation of acetyl phosphate from acetate and ATP. Can also catalyze the reverse reaction. This Campylobacter jejuni subsp. jejuni serotype O:23/36 (strain 81-176) protein is Acetate kinase.